A 385-amino-acid chain; its full sequence is 1-deoxy-D-xylulose 5-phosphate reductoisomerase 1 (385 aa).

Positions 11, 12, 13, 14, 39, and 122 each coordinate NADPH. K123 is a binding site for 1-deoxy-D-xylulose 5-phosphate. E124 is a binding site for NADPH. Mn(2+) is bound at residue D148. Positions 149, 150, 174, and 197 each coordinate 1-deoxy-D-xylulose 5-phosphate. E150 contacts Mn(2+). G203 lines the NADPH pocket. Positions 210, 215, 216, and 219 each coordinate 1-deoxy-D-xylulose 5-phosphate. Mn(2+) is bound at residue E219.

Belongs to the DXR family. The cofactor is Mg(2+). Mn(2+) serves as cofactor.

The enzyme catalyses 2-C-methyl-D-erythritol 4-phosphate + NADP(+) = 1-deoxy-D-xylulose 5-phosphate + NADPH + H(+). It participates in isoprenoid biosynthesis; isopentenyl diphosphate biosynthesis via DXP pathway; isopentenyl diphosphate from 1-deoxy-D-xylulose 5-phosphate: step 1/6. Functionally, catalyzes the NADPH-dependent rearrangement and reduction of 1-deoxy-D-xylulose-5-phosphate (DXP) to 2-C-methyl-D-erythritol 4-phosphate (MEP). This is 1-deoxy-D-xylulose 5-phosphate reductoisomerase 1 from Bacillus cereus (strain ATCC 14579 / DSM 31 / CCUG 7414 / JCM 2152 / NBRC 15305 / NCIMB 9373 / NCTC 2599 / NRRL B-3711).